The following is a 242-amino-acid chain: MAETEALSKLREDFRMQNKSVFILGASGETGRVLLKEILEQGLFSKVTLIGRRKLTFDEEAYKNVNQEVVDFEKLDDYASAFQGHDVGFCCLGTTRGKAGAEGFVRVDRDYVLKSAELAKAGGCKHFNLLSSKGADKSSKFLYLQVKGEVEAKVEELKFDRYSVFRPGVLLCDRQESRPGEWLVRKFFGSLPESWASGHSVPVVTVVRAMLNNVVRPRDKQMELLENKAIHDLGKAHGSLKP.

Ala2 bears the N-acetylalanine mark. The tract at residues Ala2–Gly25 is required for interaction with elongation factor EEF1A1. NADPH contacts are provided by Ser27, Gly28, Glu29, Thr30, Arg52, Arg53, Leu92, Gly93, Tyr143, Lys147, Leu170, and Arg178. The Proton acceptor role is filled by Tyr143. Lys147 is a catalytic residue.

Monomer. Forms homodimers during oxidative stress. Interacts (via N-terminus) with elongation factor EEF1A1 (via middle-region); the interaction is direct and competes with EEF1A1 binding to guanyl-nucleotide exchange factor EEF1B2, thereby inhibiting GDP for GTP exchange and reactivation of EEF1A1. Interacts with nuclear transport receptors XPO4, IPO5/RANBP5, IPO7, IPO9 and KPNB1 as well as GCN1L1/GCN1 and LRPPRC probably through their HEAT repeats. Binds NCOA5/CIA.

The protein localises to the cytoplasm. Functionally, represses translation by preventing reactivation of elongation factor eEF1A. May also inhibit nuclear import by competing with nuclear import substrates for binding to a subset of nuclear transport receptors. Has additionally been proposed to act as a redox sensor involved in cellular oxidative stress surveillance. The chain is Protein HTATIP2 (HTATIP2) from Gorilla gorilla gorilla (Western lowland gorilla).